The chain runs to 394 residues: Elongation factor Tu (394 aa).

The region spanning 10–204 (KEHANIGTIG…AVDTYIPTPE (195 aa)) is the tr-type G domain. Residues 19–26 (GHVDHGKT) are G1. 19–26 (GHVDHGKT) lines the GTP pocket. Residue threonine 26 participates in Mg(2+) binding. Residues 60 to 64 (GITIN) are G2. Positions 81-84 (DCPG) are G3. GTP contacts are provided by residues 81 to 85 (DCPGH) and 136 to 139 (NKVD). The segment at 136-139 (NKVD) is G4. Residues 174–176 (SAL) form a G5 region.

It belongs to the TRAFAC class translation factor GTPase superfamily. Classic translation factor GTPase family. EF-Tu/EF-1A subfamily. In terms of assembly, monomer.

The protein localises to the cytoplasm. It carries out the reaction GTP + H2O = GDP + phosphate + H(+). GTP hydrolase that promotes the GTP-dependent binding of aminoacyl-tRNA to the A-site of ribosomes during protein biosynthesis. This Staphylococcus aureus (strain COL) protein is Elongation factor Tu.